Reading from the N-terminus, the 220-residue chain is Deoxyribose-phosphate aldolase (220 aa).

The Proton donor/acceptor role is filled by Asp-89. The active-site Schiff-base intermediate with acetaldehyde is Lys-151. Lys-180 serves as the catalytic Proton donor/acceptor.

The protein belongs to the DeoC/FbaB aldolase family. DeoC type 1 subfamily.

The protein localises to the cytoplasm. The enzyme catalyses 2-deoxy-D-ribose 5-phosphate = D-glyceraldehyde 3-phosphate + acetaldehyde. It participates in carbohydrate degradation; 2-deoxy-D-ribose 1-phosphate degradation; D-glyceraldehyde 3-phosphate and acetaldehyde from 2-deoxy-alpha-D-ribose 1-phosphate: step 2/2. Its function is as follows. Catalyzes a reversible aldol reaction between acetaldehyde and D-glyceraldehyde 3-phosphate to generate 2-deoxy-D-ribose 5-phosphate. This is Deoxyribose-phosphate aldolase from Deinococcus radiodurans (strain ATCC 13939 / DSM 20539 / JCM 16871 / CCUG 27074 / LMG 4051 / NBRC 15346 / NCIMB 9279 / VKM B-1422 / R1).